The following is a 557-amino-acid chain: Formate--tetrahydrofolate ligase (557 aa).

66–73 (TPAGEGKS) serves as a coordination point for ATP.

Belongs to the formate--tetrahydrofolate ligase family.

It catalyses the reaction (6S)-5,6,7,8-tetrahydrofolate + formate + ATP = (6R)-10-formyltetrahydrofolate + ADP + phosphate. It participates in one-carbon metabolism; tetrahydrofolate interconversion. The protein is Formate--tetrahydrofolate ligase of Clostridium botulinum (strain ATCC 19397 / Type A).